The chain runs to 396 residues: DNA polymerase IV (396 aa).

The region spanning 5 to 192 (IFHVDVNSAF…LPVGELFMVG (188 aa)) is the UmuC domain. 2 residues coordinate Mg(2+): Asp-9 and Asp-111. The active site involves Glu-112.

Belongs to the DNA polymerase type-Y family. Monomer. It depends on Mg(2+) as a cofactor.

The protein localises to the cytoplasm. It carries out the reaction DNA(n) + a 2'-deoxyribonucleoside 5'-triphosphate = DNA(n+1) + diphosphate. Poorly processive, error-prone DNA polymerase involved in untargeted mutagenesis. Copies undamaged DNA at stalled replication forks, which arise in vivo from mismatched or misaligned primer ends. These misaligned primers can be extended by PolIV. Exhibits no 3'-5' exonuclease (proofreading) activity. May be involved in translesional synthesis, in conjunction with the beta clamp from PolIII. The chain is DNA polymerase IV from Clostridium acetobutylicum (strain ATCC 824 / DSM 792 / JCM 1419 / IAM 19013 / LMG 5710 / NBRC 13948 / NRRL B-527 / VKM B-1787 / 2291 / W).